The primary structure comprises 267 residues: Hydroxynaphthalene reductase-like protein Arp2 (267 aa).

The NADP(+) site is built by isoleucine 25, asparagine 45, aspartate 71, and asparagine 98. Catalysis depends on proton donor residues serine 147 and serine 148. The NADP(+) site is built by tyrosine 162, lysine 166, valine 195, and threonine 197. The active-site Proton acceptor is tyrosine 162. The active-site Lowers pKa of active site Tyr is the lysine 166.

Belongs to the short-chain dehydrogenases/reductases (SDR) family.

Its function is as follows. Hydroxynaphthalene reductase-like protein; part of the Pks2 gene cluster that mediates the formation of infectious structures (appressoria), enabling these fungi to kill insects faster. The product of the Pks2 gene cluster is different from the one of Pks1 and has still not been identified. The polypeptide is Hydroxynaphthalene reductase-like protein Arp2 (Metarhizium guizhouense (strain ARSEF 977)).